The following is a 229-amino-acid chain: Matrix protein (229 aa).

Low complexity predominate over residues 1–10; that stretch reads MSSLKKILGL. Residues 1 to 23 form a disordered region; the sequence is MSSLKKILGLKGKGKKSKKLGIA. Positions 2–4 match the dynamin binding motif; it reads SSL. The PPXY motif signature appears at 24 to 27; sequence PPPY. The short motif at 37–40 is the PTAP/PSAP motif element; the sequence is PSAP.

It belongs to the vesiculoviruses matrix protein family. As to quaternary structure, homomultimer. Interacts with viral nucleocapsid; this interaction contributes to the virion assembly. Interacts with the viral envelope glycoprotein; this interaction contributes to the virion assembly. Interacts with host RAE1-NUP98 complex. Interacts with host NEDD4 and TSG101. Interacts with host dynamin. Interacts with host NDUFAF4; the interaction inhibits viral propagation and is independent of interferon activation. Interacts with host GTF2H5; the interaction may inhibit host transcription. Phosphorylated by host.

The protein localises to the virion. Its subcellular location is the host endomembrane system. It localises to the host nucleus membrane. The protein resides in the host nucleus. It is found in the host cytoplasm. In terms of biological role, forms a double layer around the helical nucleocapsid, the inner matrix layer binding to the N helix and the outer matrix layer binding to the envelope glycoprotein. Plays a major role in assembly and budding of virion, by recruiting cellular partners of the ESCRT complexes that play a key role in releasing the budding particle from the host membrane. Condensates the ribonucleocapsid core during virus assembly. Inhibits the host mRNA nuclear export thereby inducing the shut off of cellular transcription and preventing the interferon signaling and the establishment of antiviral state in infected cells. This shutoff presumably inhibits interferon signaling and thus establishment of antiviral state in virus infected cells. Induces cell-rounding, cytoskeleton disorganization and apoptosis in infected cell. Inhibits host transcription, possibly through interaction with host DNA repair factor IIH/TFIIH GTF2H5 subunit. This Vesicular stomatitis Indiana virus (strain San Juan) (VSIV) protein is Matrix protein (M).